A 137-amino-acid chain; its full sequence is uncharacterized protein (137 aa).

It belongs to the ycf72 family.

It is found in the plastid. The protein resides in the chloroplast. This is an uncharacterized protein from Oryza nivara (Indian wild rice).